The sequence spans 192 residues: Thiosulfate reductase electron transfer subunit PhsB (192 aa).

4Fe-4S ferredoxin-type domains are found at residues 8 to 36 (YVML…VPEG), 55 to 86 (THFQ…RDEN), and 87 to 116 (GIVQ…LNPQ). [4Fe-4S] cluster contacts are provided by C17, C20, C23, C27, C64, C67, C72, C76, C96, C99, C102, C106, C123, C126, C139, and C143.

As to quaternary structure, composed of three subunits: PhsA, PhsB and PhsC. [4Fe-4S] cluster is required as a cofactor.

Its subcellular location is the cell inner membrane. In terms of biological role, component of the PhsABC thiosulfate reductase that catalyzes the reduction of thiosulfate to sulfite and hydrogen sulfide, with menaquinol as the sole electron donor. Proton motive force (PMF) is required to drive transmembrane electron transfer within the reductase. The PhsB subunit transfers electrons between PhsC and PhsA. In Salmonella typhi, this protein is Thiosulfate reductase electron transfer subunit PhsB (phsB).